The following is a 640-amino-acid chain: Translation factor GUF1, mitochondrial (640 aa).

The N-terminal 26 residues, 1-26 (MRRLRSLYLQSSICFRRFNHYSAKDT), are a transit peptide targeting the mitochondrion. One can recognise a tr-type G domain in the interval 39-223 (ENYRNFSIVA…AIIDRIPPPT (185 aa)). GTP is bound by residues 48-55 (AHVDHGKS), 115-119 (DTPGH), and 169-172 (NKID).

Belongs to the TRAFAC class translation factor GTPase superfamily. Classic translation factor GTPase family. LepA subfamily.

It is found in the mitochondrion inner membrane. It carries out the reaction GTP + H2O = GDP + phosphate + H(+). In terms of biological role, promotes mitochondrial protein synthesis. May act as a fidelity factor of the translation reaction, by catalyzing a one-codon backward translocation of tRNAs on improperly translocated ribosomes. Binds to mitochondrial ribosomes in a GTP-dependent manner. The polypeptide is Translation factor GUF1, mitochondrial (Lachancea thermotolerans (strain ATCC 56472 / CBS 6340 / NRRL Y-8284) (Yeast)).